Consider the following 31-residue polypeptide: GTLPCGESCVWIPCISSVVGCSCKSKVCYKD.

Positions 1–31 form a cross-link, cyclopeptide (Gly-Asp); that stretch reads GTLPCGESCVWIPCISSVVGCSCKSKVCYKD. 3 disulfide bridges follow: Cys-5/Cys-21, Cys-9/Cys-23, and Cys-14/Cys-28.

This is a cyclic peptide. As to expression, expressed in petioles and runners but not in leaves, petals and roots (at protein level).

Functionally, probably participates in a plant defense mechanism. The polypeptide is Cycloviolacin-O19 (Viola odorata (Sweet violet)).